We begin with the raw amino-acid sequence, 211 residues long: ATP phosphoribosyltransferase (211 aa).

This sequence belongs to the ATP phosphoribosyltransferase family. Short subfamily. In terms of assembly, heteromultimer composed of HisG and HisZ subunits.

The protein resides in the cytoplasm. The catalysed reaction is 1-(5-phospho-beta-D-ribosyl)-ATP + diphosphate = 5-phospho-alpha-D-ribose 1-diphosphate + ATP. Its pathway is amino-acid biosynthesis; L-histidine biosynthesis; L-histidine from 5-phospho-alpha-D-ribose 1-diphosphate: step 1/9. Catalyzes the condensation of ATP and 5-phosphoribose 1-diphosphate to form N'-(5'-phosphoribosyl)-ATP (PR-ATP). Has a crucial role in the pathway because the rate of histidine biosynthesis seems to be controlled primarily by regulation of HisG enzymatic activity. The protein is ATP phosphoribosyltransferase of Bacillus cereus (strain G9842).